Reading from the N-terminus, the 186-residue chain is Single-stranded DNA-binding protein 1 (186 aa).

An SSB domain is found at 1-108 (MDATVTVVGN…LEIDEIGPTL (108 aa)). The tract at residues 119–186 (TQAGHGVSPD…EDFDSDEVPF (68 aa)) is disordered. The segment covering 175–186 (SYEDFDSDEVPF) has biased composition (acidic residues).

As to quaternary structure, homotetramer.

This Tropheryma whipplei (strain Twist) (Whipple's bacillus) protein is Single-stranded DNA-binding protein 1 (ssb1).